Reading from the N-terminus, the 452-residue chain is Probable ECA polymerase (452 aa).

Helical transmembrane passes span Phe6–Phe26, Val37–Leu57, Val63–Gly83, Val118–Leu138, Gly155–Leu175, Ala181–Gly201, Ile207–Trp227, Met228–Tyr248, Leu341–Ile361, Tyr378–Ala398, and Val410–Phe430.

It belongs to the WzyE family. Probably part of a complex composed of WzxE, WzyE and WzzE.

The protein localises to the cell inner membrane. Its pathway is bacterial outer membrane biogenesis; enterobacterial common antigen biosynthesis. In terms of biological role, probably involved in the polymerization of enterobacterial common antigen (ECA) trisaccharide repeat units. The chain is Probable ECA polymerase from Salmonella newport (strain SL254).